Here is an 81-residue protein sequence, read N- to C-terminus: Defensin-like protein 153 (81 aa).

An N-terminal signal peptide occupies residues methionine 1 to glycine 26. 4 disulfides stabilise this stretch: cysteine 30–cysteine 81, cysteine 41–cysteine 60, cysteine 46–cysteine 75, and cysteine 50–cysteine 77.

Belongs to the DEFL family.

It is found in the secreted. This is Defensin-like protein 153 (LCR31) from Arabidopsis thaliana (Mouse-ear cress).